The following is a 388-amino-acid chain: Methylthioribose-1-phosphate isomerase (388 aa).

The Proton donor role is filled by D258.

The protein belongs to the eIF-2B alpha/beta/delta subunits family. MtnA subfamily.

The protein resides in the cytoplasm. The protein localises to the nucleus. It carries out the reaction 5-(methylsulfanyl)-alpha-D-ribose 1-phosphate = 5-(methylsulfanyl)-D-ribulose 1-phosphate. The protein operates within amino-acid biosynthesis; L-methionine biosynthesis via salvage pathway; L-methionine from S-methyl-5-thio-alpha-D-ribose 1-phosphate: step 1/6. In terms of biological role, catalyzes the interconversion of methylthioribose-1-phosphate (MTR-1-P) into methylthioribulose-1-phosphate (MTRu-1-P). This is Methylthioribose-1-phosphate isomerase from Sordaria macrospora (strain ATCC MYA-333 / DSM 997 / K(L3346) / K-hell).